Here is a 414-residue protein sequence, read N- to C-terminus: Cyclin-B1-3 (414 aa).

Belongs to the cyclin family. Cyclin AB subfamily. In terms of tissue distribution, expressed in roots, stems and flowers.

The polypeptide is Cyclin-B1-3 (CYCB1-3) (Arabidopsis thaliana (Mouse-ear cress)).